The sequence spans 64 residues: DNA gyrase inhibitor YacG (64 aa).

Zn(2+) is bound by residues cysteine 10, cysteine 13, cysteine 29, and cysteine 33.

It belongs to the DNA gyrase inhibitor YacG family. In terms of assembly, interacts with GyrB. Zn(2+) serves as cofactor.

Inhibits all the catalytic activities of DNA gyrase by preventing its interaction with DNA. Acts by binding directly to the C-terminal domain of GyrB, which probably disrupts DNA binding by the gyrase. The polypeptide is DNA gyrase inhibitor YacG (Pectobacterium atrosepticum (strain SCRI 1043 / ATCC BAA-672) (Erwinia carotovora subsp. atroseptica)).